The following is a 153-amino-acid chain: Small ribosomal subunit protein uS19 (153 aa).

The interval 1 to 63 (MGFRGAWNKR…QEIWDEFRAF (63 aa)) is unknown. Residues 64–153 (VNKKAWVDPK…EKSAKVVKKK (90 aa)) form a small ribosomal subunit protein uS19 region.

The protein belongs to the universal ribosomal protein uS19 family.

In terms of biological role, protein S19 forms a complex with S13 that binds strongly to the 16S ribosomal RNA. This is Small ribosomal subunit protein uS19 from Hydrogenobaculum sp. (strain Y04AAS1).